The sequence spans 301 residues: MSKYQTHLKQLEAESIQIMREVAAEFDNPVMLYSVGKDSSVLLHLARKAFYPGKIPFPLMHVDTNWKFKEMIDFRDKMAKKHGFDLIVHKNPRGMEMGVGPFTHGSAKHTDIMKTEGLKQALDMHGFDAAFGGARRDEEKSRAKERVYSFRDSKHRWDPKNQRPELWNIYNGKVDKGESIRVFPLSNWTELDIWQYIYLEGIEIPSLYLAAERPVVERDGTLIMVDDERMPIEEGEKVENKMVRFRTLGCYPLTGAVESQAQTLPEIIQEMLLCTTSERQGRVIDNDSAGSMEKKKMEGYF.

This sequence belongs to the PAPS reductase family. CysD subfamily. As to quaternary structure, heterodimer composed of CysD, the smaller subunit, and CysN.

It catalyses the reaction sulfate + ATP + H(+) = adenosine 5'-phosphosulfate + diphosphate. It participates in sulfur metabolism; hydrogen sulfide biosynthesis; sulfite from sulfate: step 1/3. Its function is as follows. With CysN forms the ATP sulfurylase (ATPS) that catalyzes the adenylation of sulfate producing adenosine 5'-phosphosulfate (APS) and diphosphate, the first enzymatic step in sulfur assimilation pathway. APS synthesis involves the formation of a high-energy phosphoric-sulfuric acid anhydride bond driven by GTP hydrolysis by CysN coupled to ATP hydrolysis by CysD. The polypeptide is Sulfate adenylyltransferase subunit 2 2 (Shewanella sediminis (strain HAW-EB3)).